The following is an 899-amino-acid chain: MGLQKKTDPEQAQADSAASRHTPMMQQYLRIKADHPDTLLFYRMGDFYELFHDDAEKAARLLDITLTARGASNGVPIRMAGIPFHSADQYLARLVKLGESVAICEQIGDPATSKGPVERKVVRIVTPGTLTDAALLPDKADTFLMAVHQQTTRRGVSKTGLAWLNLASGELRLMECEAAQLGRELERIRPAELLYADGIELPALACARTRLPEWHFDQDAGTRRLREQLGVASLDPFGCAGLGAALGAAGALLNYAATTQGQSLRHVQGVKVERESEYVGLDSATRRNLELTETLRGGESPTLFSLLDTCCTAMGSRALRHWLHHPLRDPALPQARQQAIGVLIDQGTDALRTALRRLADVERITSRLALLNARPRDLSSLRDTLRALPDVQACIRDDQGSTLLAQSLHDLAVPQDCLDLLVRAVAEEPATVVRDGGVIARGYDAGLDELRDISENCGQFLIDLETRERARTGIANLRVEFNRVHGFYIEVTNGQADKVPDDYRRRQTLKNAERYITPELKAFEDKALSAQDRALAREKQLYDGLLQALLPHIGELQRVAGALARLDVLTALAERAQTLDWSAPERVAENVVDIVQGRHPVVEGQLAAESVAFIANDCQLNEARKLLLITGPNMGGKSTFMRQTALIVLLACVGAYVPARRAVIGPIDRIFTRIGAADDLAGGRSTFMVEMTEAAGILHHATPASLVLMDEIGRGTSTFDGLALAWAIARHLLSHNRSHTLFATHYFELTQLPQEFPQAANVHLSAVEHGDGIVFLHAVQDGPASQSYGLQVAQLAGVPQPVIRAARKHLAWLEQQSADATPTPQLDLFAAPPTPDDDEDDFGAAPSAVPAPLAPTLAPEQAALVDALANLDPDTLTPRAALEALYRLKALAGEALDAA.

The tract at residues 1-20 (MGLQKKTDPEQAQADSAASR) is disordered. 631–638 (GPNMGGKS) is an ATP binding site. A disordered region spans residues 832–852 (PPTPDDDEDDFGAAPSAVPAP). Residues 843–852 (GAAPSAVPAP) are compositionally biased toward low complexity.

Belongs to the DNA mismatch repair MutS family.

In terms of biological role, this protein is involved in the repair of mismatches in DNA. It is possible that it carries out the mismatch recognition step. This protein has a weak ATPase activity. This Cupriavidus necator (strain ATCC 17699 / DSM 428 / KCTC 22496 / NCIMB 10442 / H16 / Stanier 337) (Ralstonia eutropha) protein is DNA mismatch repair protein MutS.